A 118-amino-acid polypeptide reads, in one-letter code: Small ribosomal subunit protein uS13 (118 aa).

Positions 94-118 (GLPVRGQRTKTNARTRKGPRKPIKK) are disordered.

This sequence belongs to the universal ribosomal protein uS13 family. Part of the 30S ribosomal subunit. Forms a loose heterodimer with protein S19. Forms two bridges to the 50S subunit in the 70S ribosome.

Functionally, located at the top of the head of the 30S subunit, it contacts several helices of the 16S rRNA. In the 70S ribosome it contacts the 23S rRNA (bridge B1a) and protein L5 of the 50S subunit (bridge B1b), connecting the 2 subunits; these bridges are implicated in subunit movement. Contacts the tRNAs in the A and P-sites. The sequence is that of Small ribosomal subunit protein uS13 from Erwinia tasmaniensis (strain DSM 17950 / CFBP 7177 / CIP 109463 / NCPPB 4357 / Et1/99).